The primary structure comprises 216 residues: Small ribosomal subunit protein uS5 (216 aa).

Positions 1 to 55 (MDKKLENQKDLLNQDPKVELNSQSVAKNPLNSREVKPIQRRRPLRKNARDKNSKP) are disordered. A compositionally biased stretch (polar residues) spans 20–31 (LNSQSVAKNPLN). Positions 57-120 (FEERVIAIHR…KDAQNRLVSV (64 aa)) constitute an S5 DRBM domain.

It belongs to the universal ribosomal protein uS5 family. In terms of assembly, part of the 30S ribosomal subunit. Contacts proteins S4 and S8.

In terms of biological role, with S4 and S12 plays an important role in translational accuracy. Functionally, located at the back of the 30S subunit body where it stabilizes the conformation of the head with respect to the body. The chain is Small ribosomal subunit protein uS5 from Mesomycoplasma hyopneumoniae (strain 7448) (Mycoplasma hyopneumoniae).